We begin with the raw amino-acid sequence, 166 residues long: Regulatory protein RecX (166 aa).

It belongs to the RecX family.

It localises to the cytoplasm. Its function is as follows. Modulates RecA activity. This Salmonella newport (strain SL254) protein is Regulatory protein RecX.